Consider the following 200-residue polypeptide: ATP-dependent Clp protease proteolytic subunit 3 (200 aa).

The active-site Nucleophile is serine 101. Histidine 126 is a catalytic residue.

The protein belongs to the peptidase S14 family. Fourteen ClpP subunits assemble into 2 heptameric rings which stack back to back to give a disk-like structure with a central cavity, resembling the structure of eukaryotic proteasomes.

Its subcellular location is the cytoplasm. It catalyses the reaction Hydrolysis of proteins to small peptides in the presence of ATP and magnesium. alpha-casein is the usual test substrate. In the absence of ATP, only oligopeptides shorter than five residues are hydrolyzed (such as succinyl-Leu-Tyr-|-NHMec, and Leu-Tyr-Leu-|-Tyr-Trp, in which cleavage of the -Tyr-|-Leu- and -Tyr-|-Trp bonds also occurs).. Functionally, cleaves peptides in various proteins in a process that requires ATP hydrolysis. Has a chymotrypsin-like activity. Plays a major role in the degradation of misfolded proteins. The protein is ATP-dependent Clp protease proteolytic subunit 3 of Parasynechococcus marenigrum (strain WH8102).